An 84-amino-acid polypeptide reads, in one-letter code: Putative membrane protein insertion efficiency factor (84 aa).

The disordered stretch occupies residues 63 to 84 (GEDPVPNHFTLRRNKKEKPSKS).

The protein belongs to the UPF0161 family.

It localises to the cell membrane. Could be involved in insertion of integral membrane proteins into the membrane. The chain is Putative membrane protein insertion efficiency factor from Streptococcus mutans serotype c (strain ATCC 700610 / UA159).